The primary structure comprises 222 residues: N-acetyltransferase 8F1 (222 aa).

Residues 53–73 (LVLVSGSWILAVICIFFLLLL) traverse the membrane as a helical segment. Positions 69-220 (FLLLLLRLLA…CTIQLKYSFP (152 aa)) constitute an N-acetyltransferase domain.

It belongs to the camello family.

The protein localises to the membrane. Its function is as follows. May play a role in regulation of gastrulation. This Mus musculus (Mouse) protein is N-acetyltransferase 8F1.